Consider the following 216-residue polypeptide: Small ribosomal subunit protein uS3 (216 aa).

One can recognise a KH type-2 domain in the interval 39 to 111; sequence IYKFFDKLVR…DINLQVSLLK (73 aa).

The protein belongs to the universal ribosomal protein uS3 family. In terms of assembly, part of the 30S ribosomal subunit. Forms a tight complex with proteins S10 and S14.

Its function is as follows. Binds the lower part of the 30S subunit head. Binds mRNA in the 70S ribosome, positioning it for translation. The polypeptide is Small ribosomal subunit protein uS3 (Mycoplasmopsis agalactiae (strain NCTC 10123 / CIP 59.7 / PG2) (Mycoplasma agalactiae)).